Here is a 306-residue protein sequence, read N- to C-terminus: Ribonuclease Z (306 aa).

His63, His65, Asp67, His68, His141, Asp211, and His269 together coordinate Zn(2+). Catalysis depends on Asp67, which acts as the Proton acceptor.

The protein belongs to the RNase Z family. In terms of assembly, homodimer. The cofactor is Zn(2+).

The enzyme catalyses Endonucleolytic cleavage of RNA, removing extra 3' nucleotides from tRNA precursor, generating 3' termini of tRNAs. A 3'-hydroxy group is left at the tRNA terminus and a 5'-phosphoryl group is left at the trailer molecule.. Functionally, zinc phosphodiesterase, which displays some tRNA 3'-processing endonuclease activity. Probably involved in tRNA maturation, by removing a 3'-trailer from precursor tRNA. In Staphylococcus epidermidis (strain ATCC 35984 / DSM 28319 / BCRC 17069 / CCUG 31568 / BM 3577 / RP62A), this protein is Ribonuclease Z.